A 359-amino-acid polypeptide reads, in one-letter code: CMP-N-acetylneuraminate-poly-alpha-2,8-sialyltransferase (359 aa).

At 1–7 (MRSIRKR) the chain is on the cytoplasmic side. A helical; Signal-anchor for type II membrane protein membrane pass occupies residues 8–20 (WTICTISLLLIFY). The Lumenal segment spans residues 21–359 (KTKEMARTEE…KLTTGKCIKQ (339 aa)). Asn-50, Asn-74, and Asn-119 each carry an N-linked (GlcNAc...) asparagine glycan. 2 disulfide bridges follow: Cys-142–Cys-292 and Cys-156–Cys-356. CMP-N-acetyl-beta-neuraminate is bound by residues Asn-147 and Asn-170. Asn-204 and Asn-219 each carry an N-linked (GlcNAc...) asparagine glycan. CMP-N-acetyl-beta-neuraminate is bound by residues Ser-279, Thr-280, Gly-281, and Trp-301. His-331 serves as the catalytic Proton donor/acceptor.

This sequence belongs to the glycosyltransferase 29 family. In terms of processing, autopolysialylated.

It localises to the golgi apparatus membrane. The protein resides in the secreted. It carries out the reaction [N-acetyl-alpha-D-neuraminosyl-(2-&gt;8)](n) + CMP-N-acetyl-beta-neuraminate = [N-acetyl-alpha-D-neuraminosyl-(2-&gt;8)](n+1) + CMP + H(+). Functionally, catalyzes the transfer of a sialic acid from a CMP-linked sialic acid donor onto a terminal alpha-2,3-, alpha-2,6-, or alpha-2,8-linked sialic acid of an N-linked glycan protein acceptor through alpha-2,8-linkages. Therefore, participates in polysialic acid synthesis on various sialylated N-acetyllactosaminyl oligosaccharides, including NCAM1 N-glycans, FETUB N-glycans and AHSG. It is noteworthy that alpha-2,3-linked sialic acid is apparently a better acceptor than alpha-2,6-linked sialic acid. This is CMP-N-acetylneuraminate-poly-alpha-2,8-sialyltransferase (ST8SIA4) from Bos taurus (Bovine).